The chain runs to 217 residues: Small ribosomal subunit protein uS3 (217 aa).

One can recognise a KH type-2 domain in the interval 38 to 106; it reads IRKFIQKELA…QVHINIVEIK (69 aa).

It belongs to the universal ribosomal protein uS3 family. As to quaternary structure, part of the 30S ribosomal subunit. Forms a tight complex with proteins S10 and S14.

Binds the lower part of the 30S subunit head. Binds mRNA in the 70S ribosome, positioning it for translation. The protein is Small ribosomal subunit protein uS3 of Streptococcus thermophilus (strain CNRZ 1066).